Consider the following 71-residue polypeptide: Cytotoxic linear peptide IsCT2 (71 aa).

Positions 1–23 (MKTQFAILLVALVLFQMFAQSEA) are cleaved as a signal peptide. Position 36 is a phenylalanine amide (Phe-36). Positions 40–71 (ALNNDLDLDGLDELFDGEISQADVDFLKELMR) are excised as a propeptide.

Belongs to the non-disulfide-bridged peptide (NDBP) superfamily. Short antimicrobial peptide (group 4) family. In terms of processing, isCT2F is an enzymatic proteolytic cleavage product of IsCT2 by the proteases present in the venom. Expressed by the venom gland.

The protein resides in the secreted. It is found in the target cell membrane. In terms of biological role, isCT2 shows weak hemolytic activity and antibacterial activity against both Gram-positive and Gram-negative bacteria probably by forming pores in the cell membrane. IsCT2 adopts an amphipathic alpha-helical structure. Its function is as follows. IsCT2f shows neither hemolytic, nor antibacterial activities, surely due to the fact that it cannot apply amphipathic alpha-helical structure. The protein is Cytotoxic linear peptide IsCT2 of Opisthacanthus madagascariensis (Scorpion).